Consider the following 641-residue polypeptide: Pumilio homolog 24 (641 aa).

Residues 1–82 (MSSKGLKPQK…LTEARKKKRK (82 aa)) form a disordered region. The region spanning 9 to 404 (QKSTKRKDTD…RPLLQLLHPN (396 aa)) is the PUM-HD domain. 2 stretches are compositionally biased toward basic and acidic residues: residues 14 to 27 (RKDTDSSAKFDSLK) and 67 to 76 (RVQAKELTEA). 5 Pumilio repeats span residues 118–153 (KMKGKVPEIAVSHVSSRVLQTCVKFCSQAEKDVLFT), 154–189 (ELQPQFLNLASNKYAVHFIQKMLDGASKQQLAACIS), 190–225 (SLRGHVAPLLRHVFGSLVVEHAYHLGSAAQKQELLA), 303–340 (QLLTGSLLLRMVHTRDGSRLAMLSIKHGSAKERKKIIK), and 341–378 (AMKEHVKKMAFDQFGSMVLACIFSIVDDTKLVTKIIVR). The tract at residues 427 to 468 (MDKSETSSKTKDTDGNEIGEETKDEQEDTVAEHSDHEENVTA) is disordered. Residues 428-440 (DKSETSSKTKDTD) are compositionally biased toward basic and acidic residues. Acidic residues predominate over residues 441–455 (GNEIGEETKDEQEDT). The segment covering 456–468 (VAEHSDHEENVTA) has biased composition (basic and acidic residues).

It localises to the nucleus. The protein localises to the nucleolus. Its function is as follows. Sequence-specific RNA-binding protein that regulates translation and mRNA stability by binding the 3'-UTR of target mRNAs. This chain is Pumilio homolog 24 (APUM24), found in Arabidopsis thaliana (Mouse-ear cress).